The sequence spans 319 residues: ATP-dependent 6-phosphofructokinase (319 aa).

Gly11 contacts ATP. 21–25 is an ADP binding site; it reads RAVVR. Residues 72 to 73 and 102 to 105 contribute to the ATP site; these read RS and GDGS. Asp103 contributes to the Mg(2+) binding site. 125-127 is a substrate binding site; sequence TID. Asp127 functions as the Proton acceptor in the catalytic mechanism. ADP is bound at residue Arg154. Substrate is bound by residues Arg162 and 169 to 171; that span reads MGR. Residues 185–187, Arg211, and 213–215 contribute to the ADP site; these read GAE and KKH. Residues Glu222, Arg243, and 249 to 252 contribute to the substrate site; that span reads HVQR.

This sequence belongs to the phosphofructokinase type A (PFKA) family. ATP-dependent PFK group I subfamily. Prokaryotic clade 'B1' sub-subfamily. Homotetramer. Mg(2+) is required as a cofactor.

The protein resides in the cytoplasm. The catalysed reaction is beta-D-fructose 6-phosphate + ATP = beta-D-fructose 1,6-bisphosphate + ADP + H(+). Its pathway is carbohydrate degradation; glycolysis; D-glyceraldehyde 3-phosphate and glycerone phosphate from D-glucose: step 3/4. Allosterically activated by ADP and other diphosphonucleosides, and allosterically inhibited by phosphoenolpyruvate. Its function is as follows. Catalyzes the phosphorylation of D-fructose 6-phosphate to fructose 1,6-bisphosphate by ATP, the first committing step of glycolysis. This Natranaerobius thermophilus (strain ATCC BAA-1301 / DSM 18059 / JW/NM-WN-LF) protein is ATP-dependent 6-phosphofructokinase.